Here is a 372-residue protein sequence, read N- to C-terminus: Queuine tRNA-ribosyltransferase (372 aa).

Catalysis depends on Asp-92, which acts as the Proton acceptor. Substrate-binding positions include 92-96, Asp-146, Gln-188, and Gly-215; that span reads DSGGY. An RNA binding region spans residues 246 to 252; sequence GIGSLKE. The Nucleophile role is filled by Asp-265. An RNA binding; important for wobble base 34 recognition region spans residues 270–274; the sequence is TRLGR. The Zn(2+) site is built by Cys-303, Cys-305, Cys-308, and His-334.

Belongs to the queuine tRNA-ribosyltransferase family. As to quaternary structure, homodimer. Within each dimer, one monomer is responsible for RNA recognition and catalysis, while the other monomer binds to the replacement base PreQ1. The cofactor is Zn(2+).

The catalysed reaction is 7-aminomethyl-7-carbaguanine + guanosine(34) in tRNA = 7-aminomethyl-7-carbaguanosine(34) in tRNA + guanine. Its pathway is tRNA modification; tRNA-queuosine biosynthesis. Its function is as follows. Catalyzes the base-exchange of a guanine (G) residue with the queuine precursor 7-aminomethyl-7-deazaguanine (PreQ1) at position 34 (anticodon wobble position) in tRNAs with GU(N) anticodons (tRNA-Asp, -Asn, -His and -Tyr). Catalysis occurs through a double-displacement mechanism. The nucleophile active site attacks the C1' of nucleotide 34 to detach the guanine base from the RNA, forming a covalent enzyme-RNA intermediate. The proton acceptor active site deprotonates the incoming PreQ1, allowing a nucleophilic attack on the C1' of the ribose to form the product. After dissociation, two additional enzymatic reactions on the tRNA convert PreQ1 to queuine (Q), resulting in the hypermodified nucleoside queuosine (7-(((4,5-cis-dihydroxy-2-cyclopenten-1-yl)amino)methyl)-7-deazaguanosine). This chain is Queuine tRNA-ribosyltransferase, found in Prochlorococcus marinus (strain MIT 9301).